Reading from the N-terminus, the 68-residue chain is Small, acid-soluble spore protein I (68 aa).

This sequence belongs to the SspI family.

It is found in the spore core. The sequence is that of Small, acid-soluble spore protein I from Halalkalibacterium halodurans (strain ATCC BAA-125 / DSM 18197 / FERM 7344 / JCM 9153 / C-125) (Bacillus halodurans).